Consider the following 370-residue polypeptide: Adaptive-response sensory kinase SasA (370 aa).

The region spanning 152–365 (MVAHELRTPL…CFYLTVPVWQ (214 aa)) is the Histidine kinase domain. At histidine 155 the chain carries Phosphohistidine; by autocatalysis.

Homooligomerizes. Interacts with KaiC. Participates in the KaiBC complex, whose core is composed of a KaiC homohexamer and 6 KaiB.

The enzyme catalyses ATP + protein L-histidine = ADP + protein N-phospho-L-histidine.. Its function is as follows. Member of the two-component regulatory system SasA/RpaA involved in genome-wide circadian gene expression. One of several clock output pathways. Participates in the Kai clock protein complex, the main circadian regulator in cyanobacteria, via its interaction with KaiC. KaiC enhances the autophosphorylation activity of SasA, which then transfers its phosphate group to RpaA to activate it. In addition to its output function, recruits fold-shifted KaiB (KaiB(fs)) to KaiC to cooperatively form the KaiB(6):KaiC(6) complex (independent of SasA kinase activity). Required for robustness of the circadian rhythm of gene expression and is involved in clock output, also required for adaptation to light/dark cycles. This is Adaptive-response sensory kinase SasA from Prochlorococcus marinus (strain MIT 9303).